The chain runs to 1021 residues: Sodium/potassium-transporting ATPase subunit alpha-1 (1021 aa).

Positions 1 to 5 are excised as a propeptide; sequence MGKGG. The segment covering 1–11 has biased composition (basic and acidic residues); it reads MGKGGGRDKYE. Residues 1 to 37 form a disordered region; the sequence is MGKGGGRDKYEPAAISEHGNKKKAKKERDMDELKKEV. Residues 6 to 85 lie on the Cytoplasmic side of the membrane; sequence GRDKYEPAAI…NALTPPPTTP (80 aa). Position 9 is an N6-acetyllysine (Lys-9). Tyr-10 is modified (phosphotyrosine). Ser-16 carries the phosphoserine; by PKC modification. Lys-21 is subject to N6-acetyllysine. Basic and acidic residues predominate over residues 26 to 37; that stretch reads KERDMDELKKEV. A phosphoserine mark is found at Ser-38 and Ser-45. The segment at 80-82 is phosphoinositide-3 kinase binding; sequence PPP. Residues 86 to 106 traverse the membrane as a helical segment; the sequence is EWVKFCRQLFGGFSMLLWIGA. Topologically, residues 107-129 are extracellular; it reads ILCFLAYGIQAATEEEPQNDNLY. Residues 130–150 traverse the membrane as a helical segment; that stretch reads LGVVLSAVVIITGCFSYYQEA. Residues 151-286 are Cytoplasmic-facing; it reads KSSKIMESFK…GGQTPIAAEI (136 aa). The tract at residues 214-233 is disordered; it reads SSLTGESEPQTRSPDFTNEN. Ser-226 is subject to Phosphoserine. A Phosphotyrosine modification is found at Tyr-258. The helical transmembrane segment at 287-306 threads the bilayer; sequence EHFIHIITGVAVFLGVTFFI. The Extracellular portion of the chain corresponds to 307-318; that stretch reads LSLILEYTWLEA. Residues 319–336 form a helical membrane-spanning segment; the sequence is VIFLIGIIVANVPEGLLA. Residues 337-770 are Cytoplasmic-facing; the sequence is TVTVCLTLTA…EEGRLIFDNL (434 aa). The active-site 4-aspartylphosphate intermediate is the Asp-374. A phosphoserine mark is found at Ser-450 and Ser-482. Lys-485 is an ATP binding site. Tyr-540 carries the post-translational modification Phosphotyrosine. A mediates interaction with SCN7A region spans residues 594–715; the sequence is RAAVPDAVGK…QGAIVAVTGD (122 aa). Lys-659 is subject to N6-succinyllysine. Ser-666 is modified (phosphoserine). Mg(2+)-binding residues include Asp-715 and Asp-719. The helical transmembrane segment at 771–790 threads the bilayer; the sequence is KKSIAYTLTSNIPEITPFLI. Residues 791-800 lie on the Extracellular side of the membrane; it reads FIIANIPLPL. Residues 801–821 form a helical membrane-spanning segment; that stretch reads GTVTILCIDLGTDMVPAISLA. Residues 822 to 841 are Cytoplasmic-facing; the sequence is YEQAESDIMKRQPRNPQTDK. The chain crosses the membrane as a helical span at residues 842–864; the sequence is LVNERLISMAYGQIGMIQALGGF. At 865-916 the chain is on the extracellular side; it reads FTYFVILAENGFLPIHLLGLRVDWDDRWVNDVEDSYGQQWTYEQRKIVEFTC. Residues 917–936 traverse the membrane as a helical segment; the sequence is HTAFFVSIVVVQWADLVICK. Residues 937-949 lie on the Cytoplasmic side of the membrane; that stretch reads TRRNSVFQQGMKN. Ser-941 is subject to Phosphoserine; by PKA. A helical transmembrane segment spans residues 950–968; that stretch reads KILIFGLFEETALAAFLSY. At 969–983 the chain is on the extracellular side; it reads CPGMGVALRMYPLKP. A helical membrane pass occupies residues 984-1004; the sequence is TWWFCAFPYSLLIFVYDEVRK. The Cytoplasmic segment spans residues 1005–1021; the sequence is LIIRRRPGGWVEKETYY.

It belongs to the cation transport ATPase (P-type) (TC 3.A.3) family. Type IIC subfamily. In terms of assembly, the sodium/potassium-transporting ATPase is composed of a catalytic alpha subunit, an auxiliary non-catalytic beta subunit and an additional regulatory subunit. Interacts with regulatory subunit FXYD1. Interacts with regulatory subunit FXYD3. Interacts with SIK1. Interacts with SLC35G1 and STIM1. Interacts with CLN3; this interaction regulates the sodium/potassium-transporting ATPase complex localization at the plasma membrane. Interacts with SCN7A; activates ATP1A1 P-type sodium:potassium-exchanging transporter activity which indirectly signals to nearby neurons to regulate sodium homeostasis. Post-translationally, phosphorylation on Tyr-10 modulates pumping activity. Phosphorylation of Ser-941 by PKA modulates the response of ATP1A1 to PKC. Dephosphorylation by protein phosphatase 2A (PP2A) following increases in intracellular sodium, leading to increase catalytic activity.

Its subcellular location is the cell membrane. The protein resides in the basolateral cell membrane. It is found in the sarcolemma. It localises to the cell projection. The protein localises to the axon. Its subcellular location is the melanosome. The enzyme catalyses K(+)(out) + Na(+)(in) + ATP + H2O = K(+)(in) + Na(+)(out) + ADP + phosphate + H(+). Functionally, this is the catalytic component of the active enzyme, which catalyzes the hydrolysis of ATP coupled with the exchange of sodium and potassium ions across the plasma membrane. This action creates the electrochemical gradient of sodium and potassium ions, providing the energy for active transport of various nutrients. Could also be part of an osmosensory signaling pathway that senses body-fluid sodium levels and controls salt intake behavior as well as voluntary water intake to regulate sodium homeostasis. This is Sodium/potassium-transporting ATPase subunit alpha-1 (ATP1A1) from Equus caballus (Horse).